We begin with the raw amino-acid sequence, 853 residues long: MSAIENFDAHTPMMQQYLKLKAQHPEILLFYRMGDFYELFYDDAKRASQLLDISLTKRGASAGEPIPMAGIPYHAVENYLAKLVNQGESVAICEQIGDPATSKGPVERKVVRIVTPGTISDEALLQERQDNLLAAIWQDSKGFGYATLDISSGRFRLSEPADRETMAAELQRTNPAELLYAEDFAEMSLIEGRRGLRRRPLWEFEIDTARQQLNLQFGTRDLVGFGVENAPRGLCAAGCLLQYAKDTQRTTLPHIRSITMEREQDSIIMDAATRRNLEITQNLAGGAENTLASVLDCTVTPMGSRMLKRWLHMPVRDTRVLLERQQTIGALQDFTAELQPVLRQVGDLERILARLALRTARPRDLARMRHAFQQLPELRAQLETVDSAPVQALREKMGEFAELRDLLERAIIDTPPVLVRDGGVIASGYNEELDEWRALADGATDYLERLEVRERERTGLDTLKVGFNAVHGYYIQISRGQSHLAPINYMRRQTLKNAERYIIPELKEYEDKVLTSKGKALALEKQLYEELFDLLLPHLEALQQSASALAELDVLVNLAERAYTLNYTCPTFIDKPGIRITEGRHPVVEQVLNEPFIANPLNLSPQRRMLIITGPNMGGKSTYMRQTALIALMAYIGSYVPAQKVEIGPIDRIFTRVGAADDLASGRSTFMVEMTETANILHNATEYSLVLMDEIGRGTSTYDGLSLAWACAENLANKIKALTLFATHYFELTQLPEKMEGVANVHLDALEHGDTIAFMHSVQDGAASKSYGLAVAALAGVPKEVIKRARQKLRELESISPNAAATQVDGTQMSLLSVPEETSPAVEALENLDPDSLTPRQALEWIYRLKSLV.

614–621 (GPNMGGKS) is a binding site for ATP.

Belongs to the DNA mismatch repair MutS family.

Functionally, this protein is involved in the repair of mismatches in DNA. It is possible that it carries out the mismatch recognition step. This protein has a weak ATPase activity. This is DNA mismatch repair protein MutS from Escherichia coli O157:H7 (strain EC4115 / EHEC).